The following is a 262-amino-acid chain: Ribonuclease 3 (262 aa).

The 124-residue stretch at 18–141 folds into the RNase III domain; that stretch reads LATFLKNLDI…LVGAIYEDMG (124 aa). Mg(2+) is bound at residue Glu59. Residue Asp63 is part of the active site. Residues Asp127 and Glu130 each coordinate Mg(2+). Glu130 is an active-site residue.

This sequence belongs to the ribonuclease III family. Homodimer. The cofactor is Mg(2+).

Its subcellular location is the cytoplasm. It catalyses the reaction Endonucleolytic cleavage to 5'-phosphomonoester.. Functionally, digests double-stranded RNA. Involved in the processing of primary rRNA transcript to yield the immediate precursors to the large and small rRNAs (23S and 16S). Processes some mRNAs, and tRNAs when they are encoded in the rRNA operon. Processes pre-crRNA and tracrRNA of type II CRISPR loci if present in the organism. The chain is Ribonuclease 3 from Mycoplasma genitalium (strain ATCC 33530 / DSM 19775 / NCTC 10195 / G37) (Mycoplasmoides genitalium).